We begin with the raw amino-acid sequence, 435 residues long: Hydrogenobyrinate a,c-diamide synthase (435 aa).

One can recognise a GATase cobBQ-type domain in the interval 239–422 (RIGVARDASF…IHFYLPSNPQ (184 aa)). Residue Cys-321 is the Nucleophile of the active site.

The protein belongs to the CobB/CbiA family. Requires Mg(2+) as cofactor.

The catalysed reaction is hydrogenobyrinate + 2 L-glutamine + 2 ATP + 2 H2O = hydrogenobyrinate a,c-diamide + 2 L-glutamate + 2 ADP + 2 phosphate + 2 H(+). It participates in cofactor biosynthesis; adenosylcobalamin biosynthesis; cob(II)yrinate a,c-diamide from precorrin-2 (aerobic route): step 9/10. Its function is as follows. Catalyzes the ATP-dependent amidation of the two carboxylate groups at positions a and c of hydrogenobyrinate, using either L-glutamine or ammonia as the nitrogen source. This chain is Hydrogenobyrinate a,c-diamide synthase, found in Pseudomonas aeruginosa (strain ATCC 15692 / DSM 22644 / CIP 104116 / JCM 14847 / LMG 12228 / 1C / PRS 101 / PAO1).